The chain runs to 56 residues: Sec-independent protein translocase protein TatA (56 aa).

Residues 1–21 (MALGPWQIFLILVIILVLFGA) form a helical membrane-spanning segment.

It belongs to the TatA/E family. In terms of assembly, the Tat system comprises two distinct complexes: a TatABC complex, containing multiple copies of TatA, TatB and TatC subunits, and a separate TatA complex, containing only TatA subunits. Substrates initially bind to the TatABC complex, which probably triggers association of the separate TatA complex to form the active translocon.

The protein localises to the cell inner membrane. Part of the twin-arginine translocation (Tat) system that transports large folded proteins containing a characteristic twin-arginine motif in their signal peptide across membranes. TatA could form the protein-conducting channel of the Tat system. The polypeptide is Sec-independent protein translocase protein TatA (Ehrlichia ruminantium (strain Welgevonden)).